The primary structure comprises 343 residues: D-alanine--D-alanine ligase (343 aa).

The ATP-grasp domain occupies 129–335 (KYVLEHFNIK…YSKLIDELIE (207 aa)). 162 to 217 (ENKLGYAVFIKPSNSGSSVGITKAHNRKELEAGLEEAMKYDRKILVEEALNAREIE) contacts ATP. 3 residues coordinate Mg(2+): Asp288, Glu302, and Asn304.

The protein belongs to the D-alanine--D-alanine ligase family. Requires Mg(2+) as cofactor. Mn(2+) is required as a cofactor.

Its subcellular location is the cytoplasm. It catalyses the reaction 2 D-alanine + ATP = D-alanyl-D-alanine + ADP + phosphate + H(+). It functions in the pathway cell wall biogenesis; peptidoglycan biosynthesis. In terms of biological role, cell wall formation. This chain is D-alanine--D-alanine ligase, found in Clostridium acetobutylicum (strain ATCC 824 / DSM 792 / JCM 1419 / IAM 19013 / LMG 5710 / NBRC 13948 / NRRL B-527 / VKM B-1787 / 2291 / W).